The following is a 315-amino-acid chain: Probable integrase/recombinase aq_aa09 (315 aa).

The Core-binding (CB) domain maps to 1–78; sequence MEHFIDTYLY…EVRLFYEWLQ (78 aa). The 208-residue stretch at 106–313 folds into the Tyr recombinase domain; it reads SKKKYYSDDE…REKQLEAILE (208 aa). Active-site residues include Arg-150, Lys-186, His-263, Arg-266, and His-289. The active-site O-(3'-phospho-DNA)-tyrosine intermediate is the Tyr-299.

It belongs to the 'phage' integrase family.

Its function is as follows. May function as an integrase. The polypeptide is Probable integrase/recombinase aq_aa09 (Aquifex aeolicus (strain VF5)).